Here is a 596-residue protein sequence, read N- to C-terminus: Actin-related protein 9 (596 aa).

The tract at residues 148–178 (LASPAETSPDKGDASASEAVPDVTDSKDTSE) is disordered.

Belongs to the actin family. ARP8 subfamily.

The protein is Actin-related protein 9 (ARP9) of Arabidopsis thaliana (Mouse-ear cress).